The chain runs to 190 residues: Guanylate kinase (190 aa).

The Guanylate kinase-like domain maps to 7–186 (GKLIVFSAPS…AVDDVEAAIV (180 aa)). 14–21 (APSGAGKT) serves as a coordination point for ATP.

The protein belongs to the guanylate kinase family.

The protein resides in the cytoplasm. The enzyme catalyses GMP + ATP = GDP + ADP. In terms of biological role, essential for recycling GMP and indirectly, cGMP. In Chlorobium chlorochromatii (strain CaD3), this protein is Guanylate kinase.